The sequence spans 184 residues: Protein GrpE (184 aa).

Residues 1–26 show a composition bias toward polar residues; that stretch reads MANEQNEQAQDIQNEQVEQSNEQTQA. Positions 1-34 are disordered; sequence MANEQNEQAQDIQNEQVEQSNEQTQAEGVEQAND.

The protein belongs to the GrpE family. As to quaternary structure, homodimer.

It is found in the cytoplasm. Its function is as follows. Participates actively in the response to hyperosmotic and heat shock by preventing the aggregation of stress-denatured proteins, in association with DnaK and GrpE. It is the nucleotide exchange factor for DnaK and may function as a thermosensor. Unfolded proteins bind initially to DnaJ; upon interaction with the DnaJ-bound protein, DnaK hydrolyzes its bound ATP, resulting in the formation of a stable complex. GrpE releases ADP from DnaK; ATP binding to DnaK triggers the release of the substrate protein, thus completing the reaction cycle. Several rounds of ATP-dependent interactions between DnaJ, DnaK and GrpE are required for fully efficient folding. The polypeptide is Protein GrpE (Acinetobacter baumannii (strain AB307-0294)).